Here is a 357-residue protein sequence, read N- to C-terminus: Alpha-2-macroglobulin receptor-associated protein (357 aa).

Positions 1 to 34 (MAPRRVRSFLRGLPALLLLLLFLGPWPAASHGGK) are cleaved as a signal peptide. Residues 32–52 (GGKYSREKNQPKPSPKRESGE) form a disordered region. Over residues 35-52 (YSREKNQPKPSPKRESGE) the composition is skewed to basic and acidic residues. Serine 50 and serine 135 each carry phosphoserine. Residues 219-310 (SRHTELKEKL…AHEKLRHAES (92 aa)) are a coiled coil. The tract at residues 237–353 (RLRRVSHQGY…DLSGRISRAR (117 aa)) is LDL receptor binding. A Phosphothreonine modification is found at threonine 248. N-linked (GlcNAc...) asparagine glycosylation occurs at asparagine 268. The Prevents secretion from ER signature appears at 354 to 357 (HNEL).

This sequence belongs to the alpha-2-MRAP family. As to quaternary structure, interacts with the LRP1/alpha-2-macroglobulin receptor heavy and light chains; the interaction is transient and coincides with a reduction of ligand binding by the receptor. Interacts with LRP2/glycoprotein 330. Interacts with LRP1B; binding is followed by internalization and degradation. Interacts with LDLR. Interacts with SORL1. Interacts with LRP1; this interaction is followed by rapid internalization. In terms of processing, N-glycosylated.

Its subcellular location is the rough endoplasmic reticulum lumen. It localises to the endoplasmic reticulum-Golgi intermediate compartment lumen. The protein localises to the golgi apparatus. The protein resides in the cis-Golgi network. It is found in the golgi apparatus lumen. Its subcellular location is the endosome lumen. It localises to the cell surface. Its function is as follows. Molecular chaperone for LDL receptor-related proteins that may regulate their ligand binding activity along the secretory pathway. In Homo sapiens (Human), this protein is Alpha-2-macroglobulin receptor-associated protein.